The chain runs to 353 residues: Phospho-N-acetylmuramoyl-pentapeptide-transferase (353 aa).

10 helical membrane passes run 24–44 (LGFF…ILWA), 66–86 (TPTM…VLCA), 88–108 (LGNL…FVGF), 129–149 (FGML…KGLD), 160–180 (PLFE…FLST), 192–212 (GLAS…VYVA), 229–249 (VGEL…FLWY), 256–276 (VFMG…NAIV), 281–301 (ILLV…ILQV), and 330–350 (KVIV…LLSL).

This sequence belongs to the glycosyltransferase 4 family. MraY subfamily. It depends on Mg(2+) as a cofactor.

It localises to the cell inner membrane. The enzyme catalyses UDP-N-acetyl-alpha-D-muramoyl-L-alanyl-gamma-D-glutamyl-meso-2,6-diaminopimeloyl-D-alanyl-D-alanine + di-trans,octa-cis-undecaprenyl phosphate = di-trans,octa-cis-undecaprenyl diphospho-N-acetyl-alpha-D-muramoyl-L-alanyl-D-glutamyl-meso-2,6-diaminopimeloyl-D-alanyl-D-alanine + UMP. It functions in the pathway cell wall biogenesis; peptidoglycan biosynthesis. Its function is as follows. Catalyzes the initial step of the lipid cycle reactions in the biosynthesis of the cell wall peptidoglycan: transfers peptidoglycan precursor phospho-MurNAc-pentapeptide from UDP-MurNAc-pentapeptide onto the lipid carrier undecaprenyl phosphate, yielding undecaprenyl-pyrophosphoryl-MurNAc-pentapeptide, known as lipid I. This Helicobacter pylori (strain HPAG1) protein is Phospho-N-acetylmuramoyl-pentapeptide-transferase.